The primary structure comprises 241 residues: Probable transcriptional regulatory protein RALTA_A0859 (241 aa).

It belongs to the TACO1 family.

The protein resides in the cytoplasm. The polypeptide is Probable transcriptional regulatory protein RALTA_A0859 (Cupriavidus taiwanensis (strain DSM 17343 / BCRC 17206 / CCUG 44338 / CIP 107171 / LMG 19424 / R1) (Ralstonia taiwanensis (strain LMG 19424))).